The sequence spans 89 residues: Small ribosomal subunit protein uS15 (89 aa).

Belongs to the universal ribosomal protein uS15 family. In terms of assembly, part of the 30S ribosomal subunit. Forms a bridge to the 50S subunit in the 70S ribosome, contacting the 23S rRNA.

One of the primary rRNA binding proteins, it binds directly to 16S rRNA where it helps nucleate assembly of the platform of the 30S subunit by binding and bridging several RNA helices of the 16S rRNA. Functionally, forms an intersubunit bridge (bridge B4) with the 23S rRNA of the 50S subunit in the ribosome. The protein is Small ribosomal subunit protein uS15 of Bartonella bacilliformis (strain ATCC 35685 / KC583 / Herrer 020/F12,63).